We begin with the raw amino-acid sequence, 407 residues long: Protein NIS1 (407 aa).

Low complexity predominate over residues 41–61; that stretch reads SNSNSNSNTNSNTNSNTNSNS. The segment at 41–64 is disordered; that stretch reads SNSNSNSNTNSNTNSNTNSNSDTK. A phosphoserine mark is found at Ser260, Ser264, Ser300, and Ser302. Polar residues predominate over residues 277–302; it reads IKQNSTTPTTRSVYNKNVGRSNTSPS. Residues 277–315 form a disordered region; it reads IKQNSTTPTTRSVYNKNVGRSNTSPSVLYHPKRRGKLNT. The segment covering 306-315 has biased composition (basic residues); that stretch reads HPKRRGKLNT. The SUMO-binding motif lies at 391–398; sequence IIIPDSQD.

As to quaternary structure, interacts with CBF2, GIS1, NAP1, PRM8, REI1, SHS1 and SMT3.

The protein resides in the bud neck. It localises to the cytoplasm. Its subcellular location is the cell cortex. Functionally, may be involved in a mitotic signaling network. Binds sumoylated proteins and may stabilize SUMO chains. This chain is Protein NIS1 (NIS1), found in Saccharomyces cerevisiae (strain ATCC 204508 / S288c) (Baker's yeast).